The chain runs to 368 residues: Phosphate acyltransferase (368 aa).

This sequence belongs to the PlsX family. As to quaternary structure, homodimer. Probably interacts with PlsY.

It localises to the cytoplasm. It catalyses the reaction a fatty acyl-[ACP] + phosphate = an acyl phosphate + holo-[ACP]. Its pathway is lipid metabolism; phospholipid metabolism. Its function is as follows. Catalyzes the reversible formation of acyl-phosphate (acyl-PO(4)) from acyl-[acyl-carrier-protein] (acyl-ACP). This enzyme utilizes acyl-ACP as fatty acyl donor, but not acyl-CoA. This is Phosphate acyltransferase from Granulibacter bethesdensis (strain ATCC BAA-1260 / CGDNIH1).